Reading from the N-terminus, the 439-residue chain is Cytochrome b-c1 complex reductase subunit, mitochondrial (439 aa).

Residues Met-1–Tyr-17 constitute a mitochondrion transit peptide.

This sequence belongs to the peptidase M16 family. UQCRC1/QCR1 subfamily. In terms of assembly, component of the ubiquinol-cytochrome c oxidoreductase (cytochrome b-c1 complex, complex III, CIII), a multisubunit enzyme composed of 10 subunits. The complex is composed of 3 respiratory subunits cytochrome b (COB), cytochrome c1 (CYT1) and Rieske protein (RIP1), 2 core protein subunits COR1 and QCR2, and 5 low-molecular weight protein subunits QCR6, QCR7, QCR8, QCR9 and QCR10. The complex exists as an obligatory dimer and forms supercomplexes (SCs) in the inner mitochondrial membrane with a monomer or a dimer of cytochrome c oxidase (complex IV, CIV), resulting in 2 different assemblies (supercomplexes III(2)IV and III(2)IV(2)).

Its subcellular location is the mitochondrion inner membrane. Its function is as follows. Component of the ubiquinol-cytochrome c oxidoreductase, a multisubunit transmembrane complex that is part of the mitochondrial electron transport chain which drives oxidative phosphorylation. The complex plays an important role in the uptake of multiple carbon sources present in different host niches. This is Cytochrome b-c1 complex reductase subunit, mitochondrial from Candida albicans (strain SC5314 / ATCC MYA-2876) (Yeast).